Consider the following 678-residue polypeptide: NADPH--cytochrome P450 reductase (678 aa).

At Gly-2 the chain carries N-acetylglycine. Residues 2 to 22 (GDSHEDTSATMPEAVAEEVSL) lie on the Lumenal side of the membrane. Residues 23-43 (FSTTDMVLFSLIVGVLTYWFI) traverse the membrane as a helical segment. Residues 44–678 (FRKKKEEIPE…KGRYSLDVWS (635 aa)) lie on the Cytoplasmic side of the membrane. The Flavodoxin-like domain occupies 80–224 (IIVFYGSQTG…DFITWREQFW (145 aa)). FMN-binding positions include 86–91 (SQTGTA), 138–141 (ATYG), 173–182 (LGNKTYEHFN), and Asp-208. Residues 279-521 (KNPFLAAVTA…FVRKSQFRLP (243 aa)) form the FAD-binding FR-type domain. NADP(+) is bound at residue Arg-298. Residues Arg-424, 454–457 (RYYS), 472–474 (CAV), Tyr-478, and 488–491 (GVAT) each bind FAD. Residues Thr-535, 596 to 597 (SR), 602 to 606 (KVYVQ), and Asp-639 each bind NADP(+). Residue Trp-677 coordinates FAD.

This sequence belongs to the NADPH--cytochrome P450 reductase family. It in the N-terminal section; belongs to the flavodoxin family. In the C-terminal section; belongs to the flavoprotein pyridine nucleotide cytochrome reductase family. It depends on FAD as a cofactor. The cofactor is FMN.

The protein localises to the endoplasmic reticulum membrane. It carries out the reaction 2 oxidized [cytochrome P450] + NADPH = 2 reduced [cytochrome P450] + NADP(+) + H(+). Its function is as follows. This enzyme is required for electron transfer from NADP to cytochrome P450 in microsomes. It can also provide electron transfer to heme oxygenase and cytochrome B5. The protein is NADPH--cytochrome P450 reductase of Rattus norvegicus (Rat).